The sequence spans 317 residues: MTTQLDSLRNMTVVVADTGDIDAIKKYQPQDATTNPSLILSASALPQYAPLIDEAVAYAKAQSADKAQQLIDAEDKLAVNIGLEILKIVPGRISTEVDARLSYDTQATVEKARKLIALYNAAGISNDRILIKIASTWQGIRAAEILEKEGINCNLTLLFSEAQARACAEAGVYLISPFVGRILDWYKANSDKKEYAPAEDPGVISVTKIYNYYKEYGYNTVVMGASFRNVGEITELAGCDRLTIAPALLKELQENSTALVRKLEYKGEVKAKPQPLTEAEFYWQHNSDAMAVEKLAEGIRKFAIDQEKLETMLSAKL.

Residue K132 is the Schiff-base intermediate with substrate of the active site.

It belongs to the transaldolase family. Type 1 subfamily.

Its subcellular location is the cytoplasm. It catalyses the reaction D-sedoheptulose 7-phosphate + D-glyceraldehyde 3-phosphate = D-erythrose 4-phosphate + beta-D-fructose 6-phosphate. The protein operates within carbohydrate degradation; pentose phosphate pathway; D-glyceraldehyde 3-phosphate and beta-D-fructose 6-phosphate from D-ribose 5-phosphate and D-xylulose 5-phosphate (non-oxidative stage): step 2/3. Functionally, transaldolase is important for the balance of metabolites in the pentose-phosphate pathway. This chain is Transaldolase, found in Haemophilus influenzae (strain ATCC 51907 / DSM 11121 / KW20 / Rd).